Reading from the N-terminus, the 105-residue chain is Flagellar transcriptional regulator FlhD (105 aa).

The protein belongs to the FlhD family. Homodimer; disulfide-linked. Forms a heterohexamer composed of two FlhC and four FlhD subunits. Each FlhC binds a FlhD dimer, forming a heterotrimer, and a hexamer assembles by dimerization of two heterotrimers.

The protein localises to the cytoplasm. Its function is as follows. Functions in complex with FlhC as a master transcriptional regulator that regulates transcription of several flagellar and non-flagellar operons by binding to their promoter region. Activates expression of class 2 flagellar genes, including fliA, which is a flagellum-specific sigma factor that turns on the class 3 genes. Also regulates genes whose products function in a variety of physiological pathways. The polypeptide is Flagellar transcriptional regulator FlhD (Ralstonia pickettii (strain 12J)).